The following is a 75-amino-acid chain: Cytochrome c oxidase subunit 6C (75 aa).

Topologically, residues 1–13 (MASEVLVKPQMRG) are mitochondrial matrix. The helical transmembrane segment at 14 to 54 (LLARRLRIHMVGAFLVSLGVAALYKFGVAEPRKKAYADFYK) threads the bilayer. Over 55–75 (NYSAEKDFEEMKKAGLFRSIK) the chain is Mitochondrial intermembrane.

This sequence belongs to the cytochrome c oxidase subunit 6c family. In terms of assembly, component of the cytochrome c oxidase (complex IV, CIV), a multisubunit enzyme composed of 14 subunits. The complex is composed of a catalytic core of 3 subunits MT-CO1, MT-CO2 and MT-CO3, encoded in the mitochondrial DNA, and 11 supernumerary subunits COX4I, COX5A, COX5B, COX6A, COX6B, COX6C, COX7A, COX7B, COX7C, COX8 and NDUFA4, which are encoded in the nuclear genome. The complex exists as a monomer or a dimer and forms supercomplexes (SCs) in the inner mitochondrial membrane with NADH-ubiquinone oxidoreductase (complex I, CI) and ubiquinol-cytochrome c oxidoreductase (cytochrome b-c1 complex, complex III, CIII), resulting in different assemblies (supercomplex SCI(1)III(2)IV(1) and megacomplex MCI(2)III(2)IV(2)).

The protein resides in the mitochondrion inner membrane. Its pathway is energy metabolism; oxidative phosphorylation. Its function is as follows. Component of the cytochrome c oxidase, the last enzyme in the mitochondrial electron transport chain which drives oxidative phosphorylation. The respiratory chain contains 3 multisubunit complexes succinate dehydrogenase (complex II, CII), ubiquinol-cytochrome c oxidoreductase (cytochrome b-c1 complex, complex III, CIII) and cytochrome c oxidase (complex IV, CIV), that cooperate to transfer electrons derived from NADH and succinate to molecular oxygen, creating an electrochemical gradient over the inner membrane that drives transmembrane transport and the ATP synthase. Cytochrome c oxidase is the component of the respiratory chain that catalyzes the reduction of oxygen to water. Electrons originating from reduced cytochrome c in the intermembrane space (IMS) are transferred via the dinuclear copper A center (CU(A)) of subunit 2 and heme A of subunit 1 to the active site in subunit 1, a binuclear center (BNC) formed by heme A3 and copper B (CU(B)). The BNC reduces molecular oxygen to 2 water molecules using 4 electrons from cytochrome c in the IMS and 4 protons from the mitochondrial matrix. This is Cytochrome c oxidase subunit 6C (COX6C) from Plecturocebus donacophilus (Bolivian gray titi monkey).